A 622-amino-acid polypeptide reads, in one-letter code: MSNKDELYTFGIGENFHLQNYLGVHSENGSFCFRVWAPNAENVQVIGDFTDWRNRPLQMNKNQAGVWEANSLDAREGDLYKYLVTRKGGQVVEKIDPMAVYMERRPGTASVIKVLRNKKWEDGLWMGRRKRLGFQKRPINIYEVHAGSWKKDDFGHPMTFSQLKDYLIPYLVEMNYTHVEFMPLMAHPLDMSWGYQLMGYFAFEHTYGTPEEFQDFVEACHKNNIGVLVDWVPGHFIQNDDALAYFDGTATYEYQNHDRAHNYRWGALNFDLGKNQVQSFLISSALFWIEHYHIDGIRVDAVSNMLYLDYDEGPWEANQFGDNRNLEGYHFLRKLNKVIKERHPNVMMIAEESTASTPITKDLESGGLGFDFKWNMGWMNDILRFYEEDPLYRQYDFNLVTFSFMYIFNENFVLAFSHDEVVHGKKSMMHKMWGDRYNQFAGLRNLYAYQMCHPGKKLLFMGSEFGQFLEWKYNDQLEWENLNDDMNQKMQRYTKQLNQFYKDHKCLWRIDDSFDGLEIIDADNKSETVLSFIRKDDKGDLLLCVFNMTPVERPNFTIGVPQAGIYEEVLNTEMEEFGGVWKNHNPVTKTQVATWKDYDHTLSFTLPALGASVWRIKRRLRK.

D300 acts as the Nucleophile in catalysis. The active-site Proton donor is E351.

It belongs to the glycosyl hydrolase 13 family. GlgB subfamily. In terms of assembly, monomer.

The catalysed reaction is Transfers a segment of a (1-&gt;4)-alpha-D-glucan chain to a primary hydroxy group in a similar glucan chain.. The protein operates within glycan biosynthesis; glycogen biosynthesis. In terms of biological role, catalyzes the formation of the alpha-1,6-glucosidic linkages in glycogen by scission of a 1,4-alpha-linked oligosaccharide from growing alpha-1,4-glucan chains and the subsequent attachment of the oligosaccharide to the alpha-1,6 position. This is 1,4-alpha-glucan branching enzyme GlgB from Streptococcus agalactiae serotype V (strain ATCC BAA-611 / 2603 V/R).